A 753-amino-acid polypeptide reads, in one-letter code: 5-methyltetrahydropteroyltriglutamate--homocysteine methyltransferase (753 aa).

Residues 17–20 and Lys117 contribute to the 5-methyltetrahydropteroyltri-L-glutamate site; that span reads RELK. L-homocysteine-binding positions include 431 to 433 and Glu484; that span reads IGS. Residues 431 to 433 and Glu484 each bind L-methionine; that span reads IGS. 5-methyltetrahydropteroyltri-L-glutamate contacts are provided by residues 515-516 and Trp561; that span reads RC. Residue Asp599 participates in L-homocysteine binding. Residue Asp599 coordinates L-methionine. Residue Glu605 participates in 5-methyltetrahydropteroyltri-L-glutamate binding. Residues His641, Cys643, and Glu665 each contribute to the Zn(2+) site. The active-site Proton donor is the His694. Cys726 lines the Zn(2+) pocket.

Belongs to the vitamin-B12 independent methionine synthase family. The cofactor is Zn(2+).

The catalysed reaction is 5-methyltetrahydropteroyltri-L-glutamate + L-homocysteine = tetrahydropteroyltri-L-glutamate + L-methionine. It participates in amino-acid biosynthesis; L-methionine biosynthesis via de novo pathway; L-methionine from L-homocysteine (MetE route): step 1/1. Functionally, catalyzes the transfer of a methyl group from 5-methyltetrahydrofolate to homocysteine resulting in methionine formation. The polypeptide is 5-methyltetrahydropteroyltriglutamate--homocysteine methyltransferase (Shigella dysenteriae serotype 1 (strain Sd197)).